We begin with the raw amino-acid sequence, 140 residues long: Large ribosomal subunit protein bL17 (140 aa).

Belongs to the bacterial ribosomal protein bL17 family. In terms of assembly, part of the 50S ribosomal subunit. Contacts protein L32.

The chain is Large ribosomal subunit protein bL17 from Rhizobium leguminosarum bv. trifolii (strain WSM2304).